The primary structure comprises 147 residues: Deoxyuridine 5'-triphosphate nucleotidohydrolase (147 aa).

DUMP contacts are provided by S69, G82, D85, Y88, K93, R137, F142, and G143.

Belongs to the dUTPase family. In terms of assembly, homotrimer. Mg(2+) is required as a cofactor.

It carries out the reaction dUTP + H2O = dUMP + diphosphate + H(+). It functions in the pathway pyrimidine metabolism; dUMP biosynthesis; dUMP from dCTP (dUTP route): step 2/2. Its function is as follows. Involved in nucleotide metabolism via production of dUMP, the immediate precursor of thymidine nucleotides, and decreases the intracellular concentration of dUTP so that uracil cannot be incorporated into DNA. Shows a significant activity against dITP, another potentially mutagenic nucleotide. The chain is Deoxyuridine 5'-triphosphate nucleotidohydrolase from Saccharomyces cerevisiae (strain ATCC 204508 / S288c) (Baker's yeast).